Here is a 159-residue protein sequence, read N- to C-terminus: Transcription elongation factor A protein-like 1 (159 aa).

Residues 1–120 (MEKACKEPEE…PQFRGDIHGR (120 aa)) are disordered. Basic and acidic residues predominate over residues 17–34 (KADEERPSVEPSPEKSSP). A compositionally biased stretch (acidic residues) spans 37–54 (QSSEEVSSEEEFFPDELL). Basic and acidic residues-rich tracts occupy residues 64–80 (SEER…DLFE) and 95–119 (HKLE…DIHG).

This sequence belongs to the TFS-II family. TFA subfamily.

The protein resides in the nucleus. Its function is as follows. May be involved in transcriptional regulation. Modulates various viral and cellular promoters in a promoter context-dependent manner. Does not bind DNA directly. This chain is Transcription elongation factor A protein-like 1, found in Bos taurus (Bovine).